We begin with the raw amino-acid sequence, 393 residues long: Probable protein phosphatase 2C 72 (393 aa).

The region spanning 49–357 (EFSMAVVQAN…DDITVVVVFF (309 aa)) is the PPM-type phosphatase domain. D88 and G89 together coordinate Mn(2+). Residues 147–167 (LAAVGSCCLVGVICAGNLYIA) traverse the membrane as a helical segment. 2 residues coordinate Mn(2+): D289 and D348.

It belongs to the PP2C family. It depends on Mg(2+) as a cofactor. Mn(2+) serves as cofactor.

The protein resides in the membrane. It carries out the reaction O-phospho-L-seryl-[protein] + H2O = L-seryl-[protein] + phosphate. The catalysed reaction is O-phospho-L-threonyl-[protein] + H2O = L-threonyl-[protein] + phosphate. The protein is Probable protein phosphatase 2C 72 of Oryza sativa subsp. japonica (Rice).